Consider the following 306-residue polypeptide: ATP-dependent (S)-NAD(P)H-hydrate dehydratase (306 aa).

Residues Leu-4–Leu-300 enclose the YjeF C-terminal domain. Residues Gly-104 and Asn-157 to Ser-163 contribute to the (6S)-NADPHX site. ATP is bound by residues Lys-197–Asp-201 and Gly-216–Gly-225. Asp-226 serves as a coordination point for (6S)-NADPHX.

It belongs to the NnrD/CARKD family. Mg(2+) serves as cofactor.

It carries out the reaction (6S)-NADHX + ATP = ADP + phosphate + NADH + H(+). The enzyme catalyses (6S)-NADPHX + ATP = ADP + phosphate + NADPH + H(+). Its function is as follows. Catalyzes the dehydration of the S-form of NAD(P)HX at the expense of ATP, which is converted to ADP. Together with NAD(P)HX epimerase, which catalyzes the epimerization of the S- and R-forms, the enzyme allows the repair of both epimers of NAD(P)HX, a damaged form of NAD(P)H that is a result of enzymatic or heat-dependent hydration. In Dictyostelium discoideum (Social amoeba), this protein is ATP-dependent (S)-NAD(P)H-hydrate dehydratase.